The chain runs to 293 residues: 4-diphosphocytidyl-2-C-methyl-D-erythritol kinase (293 aa).

The active site involves K16. 99–109 (PMGAGLGGGSS) serves as a coordination point for ATP. D141 is a catalytic residue.

Belongs to the GHMP kinase family. IspE subfamily.

The catalysed reaction is 4-CDP-2-C-methyl-D-erythritol + ATP = 4-CDP-2-C-methyl-D-erythritol 2-phosphate + ADP + H(+). It participates in isoprenoid biosynthesis; isopentenyl diphosphate biosynthesis via DXP pathway; isopentenyl diphosphate from 1-deoxy-D-xylulose 5-phosphate: step 3/6. Its function is as follows. Catalyzes the phosphorylation of the position 2 hydroxy group of 4-diphosphocytidyl-2C-methyl-D-erythritol. The sequence is that of 4-diphosphocytidyl-2-C-methyl-D-erythritol kinase from Burkholderia orbicola (strain MC0-3).